The chain runs to 751 residues: Probable alpha-galactosidase C (751 aa).

Residues 1-27 (MFGSPKRAALAAASLLAVFGNGPSVMA) form the signal peptide. Residues N49, N57, N162, N186, N194, N366, N433, N452, and N500 are each glycosylated (N-linked (GlcNAc...) asparagine). The Nucleophile role is filled by D510. D572 functions as the Proton donor in the catalytic mechanism. N720 is a glycosylation site (N-linked (GlcNAc...) asparagine).

This sequence belongs to the glycosyl hydrolase 36 family. As to quaternary structure, homotetramer. The cofactor is Mg(2+). Requires NAD(+) as cofactor.

It localises to the secreted. It catalyses the reaction Hydrolysis of terminal, non-reducing alpha-D-galactose residues in alpha-D-galactosides, including galactose oligosaccharides, galactomannans and galactolipids.. Its function is as follows. Hydrolyzes a variety of simple alpha-D-galactoside as well as more complex molecules such as oligosaccharides and polysaccharides. The chain is Probable alpha-galactosidase C (aglC) from Aspergillus oryzae (strain ATCC 42149 / RIB 40) (Yellow koji mold).